The chain runs to 748 residues: Disintegrin and metalloproteinase domain-containing protein 10 (748 aa).

The first 19 residues, 1–19 (MVLLRVLILLLSWVAGLGG), serve as a signal peptide directing secretion. Positions 20–213 (QYGNPLNKYI…NGPELLRKKR (194 aa)) are excised as a propeptide. Residues 20–672 (QYGNPLNKYI…SPELYENIAE (653 aa)) lie on the Extracellular side of the membrane. The short motif at 171–178 (GGCADHSV) is the Cysteine switch element. Cysteine 173 contacts Zn(2+). Residues 220 to 456 (NTCQLYIQTD…KRNNCFVESG (237 aa)) form the Peptidase M12B domain. N-linked (GlcNAc...) asparagine glycosylation is found at asparagine 267 and asparagine 278. 16 disulfide bridges follow: cysteine 344-cysteine 451, cysteine 399-cysteine 435, cysteine 460-cysteine 495, cysteine 471-cysteine 484, cysteine 473-cysteine 479, cysteine 483-cysteine 515, cysteine 503-cysteine 511, cysteine 510-cysteine 536, cysteine 524-cysteine 543, cysteine 530-cysteine 562, cysteine 555-cysteine 567, cysteine 572-cysteine 598, cysteine 580-cysteine 607, cysteine 582-cysteine 597, cysteine 594-cysteine 639, and cysteine 632-cysteine 645. Histidine 383 serves as a coordination point for Zn(2+). Residue glutamate 384 is part of the active site. Zn(2+) contacts are provided by histidine 387 and histidine 393. A glycan (N-linked (GlcNAc...) asparagine) is linked at asparagine 439. The region spanning 457-551 (QPICGNGMVE…LCPASDPKPN (95 aa)) is the Disintegrin domain. An N-linked (GlcNAc...) asparagine glycan is attached at asparagine 551. A helical membrane pass occupies residues 673-696 (WIVAYWWAVLLMGIALIMLMAGFI). At 697–748 (KICSVHTPSSNPKLPPPKPLPGTLKRRRPPQPIQQPQRQRPRESYQMGHMRR) the chain is on the cytoplasmic side. The interval 704 to 748 (PSSNPKLPPPKPLPGTLKRRRPPQPIQQPQRQRPRESYQMGHMRR) is disordered. Residues 708–715 (PKLPPPKP) carry the SH3-binding motif. Threonine 719 carries the post-translational modification Phosphothreonine. The short motif at 722 to 728 (RRRPPQP) is the SH3-binding element. The tract at residues 734-748 (RQRPRESYQMGHMRR) is interaction with AP2A1, AP2A2 and AP2M1.

In terms of assembly, forms a ternary EFNA5-EPHA3-ADAM10 complex mediating EFNA5 extracellular domain shedding by ADAM10 which regulates the EFNA5-EPHA3 complex internalization and function, the cleavage occurs in trans, with ADAM10 and its substrate being on the membranes of opposing cells. Interacts with the clathrin adapter AP2 complex subunits AP2A1, AP2A2, AP2B1, and AP2M1; this interaction facilitates ADAM10 endocytosis from the plasma membrane during long-term potentiation in hippocampal neurons. Forms a ternary complex composed of ADAM10, EPHA4 and CADH1; within the complex, ADAM10 cleaves CADH1 which disrupts adherens junctions. Interacts with EPHA2. Interacts with NGF in a divalent cation-dependent manner. Interacts with TSPAN14; the interaction promotes ADAM10 maturation and cell surface expression. Interacts with TSPAN5, TSPAN10, TSPAN14, TSPAN15, TSPAN17 and TSPAN33; these interactions regulate ADAM10 substrate specificity, endocytosis and turnover. Interacts (via extracellular domain) with TSPAN33 (via extracellular domain) and (via cytoplasmic domain) with AFDN; interaction with TSPAN33 allows the docking of ADAM10 to zonula adherens through a PDZ11-dependent interaction between TSPAN33 and PLEKHA7 while interaction with AFDN locks ADAM10 at zonula adherens. Interacts with DLG1; this interaction recruits ADAM10 to the cell membrane during long-term depression in hippocampal neurons. Interacts (via extracellular domain) with BACE1 (via extracellular domain). Interacts with FAM171A1. The cofactor is Zn(2+). Post-translationally, the precursor is cleaved by furin and PCSK7. Expressed at low level in kidney, spleen, lung, adrenal, heart and peripheral nerve.

It is found in the golgi apparatus membrane. The protein resides in the cell membrane. It localises to the cytoplasmic vesicle. The protein localises to the clathrin-coated vesicle. Its subcellular location is the cell projection. It is found in the axon. The protein resides in the dendrite. It localises to the cell junction. The protein localises to the adherens junction. Its subcellular location is the cytoplasm. The catalysed reaction is Endopeptidase of broad specificity.. Catalytically inactive when the propeptide is intact and associated with the mature enzyme. The disintegrin and cysteine-rich regions modulate access of substrates to exerts an inhibitory effect on the cleavage of ADAM10 substrates. Functionally, transmembrane metalloprotease which mediates the ectodomain shedding of a myriad of transmembrane proteins, including adhesion proteins, growth factor precursors and cytokines being essential for development and tissue homeostasis. Associates with six members of the tetraspanin superfamily TspanC8 which regulate its exit from the endoplasmic reticulum and its substrate selectivity. Cleaves the membrane-bound precursor of TNF-alpha at '76-Ala-|-Val-77' to its mature soluble form. Responsible for the proteolytical release of soluble JAM3 from endothelial cells surface. Responsible for the proteolytic release of several other cell-surface proteins, including heparin-binding epidermal growth-like factor, ephrin-A2, CD44, CDH2 and for constitutive and regulated alpha-secretase cleavage of amyloid precursor protein (APP). Contributes to the normal cleavage of the cellular prion protein. Involved in the cleavage of the adhesion molecule L1 at the cell surface and in released membrane vesicles, suggesting a vesicle-based protease activity. Also controls the proteolytic processing of Notch and mediates lateral inhibition during neurogenesis. Required for the development of type 1 transitional B cells into marginal zone B cells, probably by cleaving Notch. Responsible for the FasL ectodomain shedding and for the generation of the remnant ADAM10-processed FasL (FasL APL) transmembrane form. Also cleaves the ectodomain of the integral membrane proteins CORIN and ITM2B. Mediates the proteolytic cleavage of LAG3, leading to release the secreted form of LAG3. Mediates the proteolytic cleavage of IL6R and IL11RA, leading to the release of secreted forms of IL6R and IL11RA. Enhances the cleavage of CHL1 by BACE1. Cleaves NRCAM. Cleaves TREM2, resulting in shedding of the TREM2 ectodomain. Involved in the development and maturation of glomerular and coronary vasculature. During development of the cochlear organ of Corti, promotes pillar cell separation by forming a ternary complex with CADH1 and EPHA4 and cleaving CADH1 at adherens junctions. May regulate the EFNA5-EPHA3 signaling. Regulates leukocyte transmigration as a sheddase for the adherens junction protein VE-cadherin/CDH5 in endothelial cells. This is Disintegrin and metalloproteinase domain-containing protein 10 (ADAM10) from Bos taurus (Bovine).